The sequence spans 352 residues: Anthranilate phosphoribosyltransferase (352 aa).

Residues G82, 85–86 (GD), S90, 92–95 (NIST), 110–118 (KHGNRAVTG), and G122 each bind 5-phospho-alpha-D-ribose 1-diphosphate. Position 82 (G82) interacts with anthranilate. S94 provides a ligand contact to Mg(2+). An anthranilate-binding site is contributed by N113. R168 provides a ligand contact to anthranilate. Positions 232 and 233 each coordinate Mg(2+).

The protein belongs to the anthranilate phosphoribosyltransferase family. Homodimer. The cofactor is Mg(2+).

The catalysed reaction is N-(5-phospho-beta-D-ribosyl)anthranilate + diphosphate = 5-phospho-alpha-D-ribose 1-diphosphate + anthranilate. It functions in the pathway amino-acid biosynthesis; L-tryptophan biosynthesis; L-tryptophan from chorismate: step 2/5. Catalyzes the transfer of the phosphoribosyl group of 5-phosphorylribose-1-pyrophosphate (PRPP) to anthranilate to yield N-(5'-phosphoribosyl)-anthranilate (PRA). The chain is Anthranilate phosphoribosyltransferase from Methanothermobacter thermautotrophicus (strain ATCC 29096 / DSM 1053 / JCM 10044 / NBRC 100330 / Delta H) (Methanobacterium thermoautotrophicum).